Reading from the N-terminus, the 617-residue chain is 5-hydroxytryptamine receptor 2B (617 aa).

The Extracellular portion of the chain corresponds to 1 to 95; it reads MLKTVTTAMA…LLVKMIAMAV (95 aa). 4 N-linked (GlcNAc...) asparagine glycosylation sites follow: Asn-31, Asn-41, Asn-51, and Asn-58. A helical transmembrane segment spans residues 96–116; it reads VLGLMILVTIIGNVFVIAAII. Over 117–128 the chain is Cytoplasmic; the sequence is LERNLQNVANYL. The chain crosses the membrane as a helical span at residues 129 to 149; that stretch reads VASLAVADLFVACLVMPLGAV. The Extracellular portion of the chain corresponds to 150-164; it reads YEISNGWILGPELCD. An intrachain disulfide couples Cys-163 to Cys-242. A helical transmembrane segment spans residues 165-185; sequence IWTSCDVLCCTASILHLVAIA. Topologically, residues 186–205 are cytoplasmic; that stretch reads ADRYWTVTNIDYNNLRTPRR. Residues 206–226 traverse the membrane as a helical segment; it reads VFLMIFCVWFAALIVSLAPQF. Residues 227–256 lie on the Extracellular side of the membrane; that stretch reads GWKDPDYMKRIEEQHCMVSQDVGYQIFATC. A helical transmembrane segment spans residues 257 to 277; it reads CTFYVPLLVILFLYWKIYIIA. Residues 278 to 534 lie on the Cytoplasmic side of the membrane; it reads RKRIQRRAQK…EAKRERKAAQ (257 aa). A disordered region spans residues 309–336; sequence RSKRRAERKRLEAGERTPVDGDGTGGQL. Basic and acidic residues predominate over residues 317–327; sequence KRLEAGERTPV. A helical membrane pass occupies residues 535-555; it reads TLAIITGAFVICWLPFFVMAL. Topologically, residues 556–570 are extracellular; it reads TMSLCKECEIHTAVA. A helical membrane pass occupies residues 571–591; the sequence is SLFLWLGYFNSTLNPVIYTIF. The Cytoplasmic segment spans residues 592-617; sequence NPEFRRAFKRILFGRKAAARARSAKI.

Belongs to the G-protein coupled receptor 1 family.

It is found in the cell membrane. Its function is as follows. This is one of the several different receptors for 5-hydroxytryptamine (serotonin), a biogenic hormone that functions as a neurotransmitter, a hormone, and a mitogen. The activity of this receptor is mediated by G proteins which inhibit adenylate cyclase. This is 5-hydroxytryptamine receptor 2B (5-HT1B) from Drosophila melanogaster (Fruit fly).